A 348-amino-acid polypeptide reads, in one-letter code: 4-hydroxyphenylpyruvate dioxygenase (348 aa).

VOC domains are found at residues 11–141 and 151–303; these read GFAF…ITSP and AIDH…IFTE. 3 residues coordinate Fe cation: H154, H232, and E312.

This sequence belongs to the 4HPPD family. Requires Fe cation as cofactor.

It catalyses the reaction 3-(4-hydroxyphenyl)pyruvate + O2 = homogentisate + CO2. In terms of biological role, catalyzes the transformation of p-hydroxyphenylpyruvate into HGA. Has hemolytic and brown pigment production activity. In Legionella pneumophila subsp. pneumophila (strain Philadelphia 1 / ATCC 33152 / DSM 7513), this protein is 4-hydroxyphenylpyruvate dioxygenase (lly).